Consider the following 528-residue polypeptide: MDLPVVLIADKLAQSTVAALGDQVEVRWVDGPDRTKLLAAVPEADALLVRSATTVDAEVLAAAPKLKIVARAGVGLDNVDVDAATARGVLVVNAPTSNIHSAAEHALALLLAASRQIAEADASLRAHIWKRSSFSGTEIFGKTVGVVGLGRIGQLVAARIAAFGAHVIAYDPYVAPARAAQLGIELMSFDDLLARADFISVHLPKTPETAGLIDKEALAKTKPGVIIVNAARGGLVDEVALADAVRSGHVRAAGLDVFATEPCTDSPLFELSQVVVTPHLGASTAEAQDRAGTDVAESVRLALAGEFVPDAVNVDGGVVNEEVAPWLDLVCKLGVLVAALSDELPASLSVHVRGELASEDVEILRLSALRGLFSTVIEDAVTFVNAPALAAERGVSAEITTGSESPNHRSVVDVRAVASDGSVVNIAGTLSGPQLVQKIVQVNGRNFDLRAQGMNLVIRYVDQPGALGKIGTLLGAAGVNIQAAQLSEDTEGPGATILLRLDQDVPGDVRSAIVAAVSANKLEVVNLS.

Residues 151–152 (RI), D171, 230–232 (AAR), and D256 each bind NAD(+). The active site involves R232. Residue E261 is part of the active site. Residue H279 is the Proton donor of the active site. 279–282 (HLGA) is a binding site for NAD(+). The region spanning 455–528 (NLVIRYVDQP…ANKLEVVNLS (74 aa)) is the ACT domain.

It belongs to the D-isomer specific 2-hydroxyacid dehydrogenase family.

It carries out the reaction (2R)-3-phosphoglycerate + NAD(+) = 3-phosphooxypyruvate + NADH + H(+). The catalysed reaction is (R)-2-hydroxyglutarate + NAD(+) = 2-oxoglutarate + NADH + H(+). It functions in the pathway amino-acid biosynthesis; L-serine biosynthesis; L-serine from 3-phospho-D-glycerate: step 1/3. Catalyzes the reversible oxidation of 3-phospho-D-glycerate to 3-phosphonooxypyruvate, the first step of the phosphorylated L-serine biosynthesis pathway. Also catalyzes the reversible oxidation of 2-hydroxyglutarate to 2-oxoglutarate. This is D-3-phosphoglycerate dehydrogenase (serA) from Mycobacterium leprae (strain TN).